Here is a 375-residue protein sequence, read N- to C-terminus: Heat shock protein 42 (375 aa).

Disordered regions lie at residues 21-59 (TGQR…HPLY), 81-127 (SPEY…YYHC), 154-238 (PYEG…ETRM), and 347-375 (PKPK…TVEN). Low complexity predominate over residues 22–48 (GQRGQQGYPRQPQRPQRYHPHYGQVHV). Positions 49-58 (GGHHPRHHPL) are enriched in basic residues. 2 stretches are compositionally biased toward acidic residues: residues 85 to 101 (GYDD…EDMV) and 158 to 168 (TEPEIEANTEQ). The segment covering 169 to 197 (EGEKGEEKDKKDKSEAPKEEAGETNKEKP) has biased composition (basic and acidic residues). Phosphoserine is present on residues Ser-182, Ser-213, Ser-214, Ser-215, and Ser-223. The 120-residue stretch at 237–356 (RMDLPFSPEV…PKPKKRIAIE (120 aa)) folds into the sHSP domain. The segment covering 357 to 367 (EIPDEELEFEE) has biased composition (acidic residues).

Belongs to the small heat shock protein (HSP20) family. Forms oligomeric complexes. Interacts with itself.

This Saccharomyces cerevisiae (strain ATCC 204508 / S288c) (Baker's yeast) protein is Heat shock protein 42 (HSP42).